The primary structure comprises 665 residues: Kinesin-like protein KIF22 (665 aa).

One can recognise a Kinesin motor domain in the interval 43–368; it reads RVRVAVRLRP…LNFAARSKEV (326 aa). 127 to 134 contributes to the ATP binding site; sequence GPTGAGKT. Positions 379 to 428 are disordered; the sequence is QPHALGPVKLSQKELLGPPEAKRARGPEEEEIGSPEPMAAPASASQKLSP. Residues S412, S427, and S452 each carry the phosphoserine modification. The segment covering 412–428 has biased composition (low complexity); that stretch reads SPEPMAAPASASQKLSP. K465 participates in a covalent cross-link: Glycyl lysine isopeptide (Lys-Gly) (interchain with G-Cter in SUMO2). Residues 465-508 are a coiled coil; it reads KRERMVLMKTVEEKDLEIERLKTKQKELEAKMLAQKAEEKENHC. Phosphoserine occurs at positions 543, 562, and 581.

This sequence belongs to the TRAFAC class myosin-kinesin ATPase superfamily. Kinesin family. In terms of assembly, interacts with FAM83D. Interacts with SIAH1. Post-translationally, ubiquitinated; mediated by SIAH1 and leading to its subsequent proteasomal degradation. As to expression, expressed in bone, cartilage, joint capsule, ligament, skin, and primary cultured chondrocytes.

It is found in the nucleus. The protein resides in the cytoplasm. Its subcellular location is the cytoskeleton. Kinesin family member that is involved in spindle formation and the movements of chromosomes during mitosis and meiosis. Binds to microtubules and to DNA. Plays a role in congression of laterally attached chromosomes in NDC80-depleted cells. The polypeptide is Kinesin-like protein KIF22 (KIF22) (Homo sapiens (Human)).